Here is a 350-residue protein sequence, read N- to C-terminus: MLEQLQTLKSEAETQIKEASDLKTLNDLRVKYLGKKGPMTEIMKQMGKLSAEEKPKMGSLANEVRTALTKAITGKQQILETEAINEKLKAETIDITLPGTAPSIGTKHLLTQVIEEMEDMFIGMGYEIAEGPEVELDYYNFEALNLPKDHPARDMQDSFYITENTLLRTQTSPVQARTMEKHDFSKGPIKVICPGKVYRRDNDDATHSHQFTQIEGLVVGENITFADLKGTLTVLAKTMFGEEREIRLRPSFFPFTEPSVEMDISCFKCGGKGCRVCKGTGWIEILGSGMVHPNVLEMSGIDSTRYSGFAFGLGPERVAMLKYAVDDIRHLYTNDLRFTKQFQSTETGEI.

Position 257 (Glu257) interacts with Mg(2+).

This sequence belongs to the class-II aminoacyl-tRNA synthetase family. Phe-tRNA synthetase alpha subunit type 1 subfamily. As to quaternary structure, tetramer of two alpha and two beta subunits. Mg(2+) serves as cofactor.

Its subcellular location is the cytoplasm. The enzyme catalyses tRNA(Phe) + L-phenylalanine + ATP = L-phenylalanyl-tRNA(Phe) + AMP + diphosphate + H(+). In Listeria welshimeri serovar 6b (strain ATCC 35897 / DSM 20650 / CCUG 15529 / CIP 8149 / NCTC 11857 / SLCC 5334 / V8), this protein is Phenylalanine--tRNA ligase alpha subunit.